The following is a 136-amino-acid chain: Blasticidin-S acetyltransferase (136 aa).

In terms of domain architecture, N-acetyltransferase spans 1–136 (MLSLPRLQTV…ITSHLLVKEL (136 aa)).

In terms of biological role, confers resistance to blasticidin S antibiotic. The chain is Blasticidin-S acetyltransferase (bls) from Streptomyces morookaense (Streptoverticillium morookaense).